The following is a 216-amino-acid chain: Adenylate kinase (216 aa).

10–15 (GAGKGT) is an ATP binding site. The interval 30–59 (STGDMFRAAMKAETELGLQAKSFIDKGALV) is NMP. AMP contacts are provided by residues Thr-31, Arg-36, 57 to 59 (ALV), 85 to 88 (GFPR), and Gln-92. The interval 126–163 (GRRICKECGATYHLEFNPPAKADVCDKCGGELYQRSDD) is LID. Position 127 (Arg-127) interacts with ATP. 2 residues coordinate Zn(2+): Cys-130 and Cys-133. Position 136 to 137 (136 to 137 (TY)) interacts with ATP. 2 residues coordinate Zn(2+): Cys-150 and Cys-153. AMP-binding residues include Arg-160 and Arg-171. Gln-199 lines the ATP pocket.

Belongs to the adenylate kinase family. As to quaternary structure, monomer.

The protein localises to the cytoplasm. The catalysed reaction is AMP + ATP = 2 ADP. It participates in purine metabolism; AMP biosynthesis via salvage pathway; AMP from ADP: step 1/1. Its function is as follows. Catalyzes the reversible transfer of the terminal phosphate group between ATP and AMP. Plays an important role in cellular energy homeostasis and in adenine nucleotide metabolism. The polypeptide is Adenylate kinase (Bacillus mycoides (strain KBAB4) (Bacillus weihenstephanensis)).